A 549-amino-acid polypeptide reads, in one-letter code: GPI mannosyltransferase 3 (549 aa).

Over Met-1–Ser-39 the chain is Cytoplasmic. The chain crosses the membrane as a helical span at residues Leu-40–Ile-60. Residues Lys-61–Pro-119 are Lumenal-facing. A helical transmembrane segment spans residues Ile-120–Tyr-140. Residues Lys-141 to Arg-154 lie on the Cytoplasmic side of the membrane. The helical transmembrane segment at Leu-155–Ser-175 threads the bilayer. At Asn-176–Cys-205 the chain is on the lumenal side. Residues Ile-206 to Gly-226 form a helical membrane-spanning segment. At Ile-227–Leu-246 the chain is on the cytoplasmic side. Residues Ile-247 to Ile-267 traverse the membrane as a helical segment. At Phe-268–Ser-289 the chain is on the lumenal side. A glycan (N-linked (GlcNAc...) asparagine) is linked at Asn-287. Residues Ile-290 to Met-310 traverse the membrane as a helical segment. Residues Thr-311–Ser-328 are Cytoplasmic-facing. The chain crosses the membrane as a helical span at residues Leu-329–Ile-349. Arg-350 is a topological domain (lumenal). Residues Phe-351–Ile-367 traverse the membrane as a helical segment. Residues His-368 to Lys-379 are Cytoplasmic-facing. A helical transmembrane segment spans residues Phe-380–His-400. Residues Glu-401–Ile-549 lie on the Lumenal side of the membrane. An N-linked (GlcNAc...) asparagine glycan is attached at Asn-442.

It belongs to the glycosyltransferase 22 family. PIGB subfamily.

It localises to the endoplasmic reticulum membrane. Its pathway is glycolipid biosynthesis; glycosylphosphatidylinositol-anchor biosynthesis. In terms of biological role, mannosyltransferase involved in glycosylphosphatidylinositol-anchor biosynthesis. Transfers the third mannose to Man2-GlcN-acyl-PI during GPI precursor assembly. The sequence is that of GPI mannosyltransferase 3 (GPI10) from Debaryomyces hansenii (strain ATCC 36239 / CBS 767 / BCRC 21394 / JCM 1990 / NBRC 0083 / IGC 2968) (Yeast).